A 134-amino-acid polypeptide reads, in one-letter code: UPF0412 protein YaaI (134 aa).

The first 23 residues, 1–23 (MKSVFTISASLAISLMLCCTAQA), serve as a signal peptide directing secretion.

It belongs to the UPF0412 family.

The protein is UPF0412 protein YaaI of Shigella dysenteriae serotype 1 (strain Sd197).